The following is a 250-amino-acid chain: Shieldin complex subunit 3 (250 aa).

The sufficient for interaction with MAD2L2 stretch occupies residues 28-83; the sequence is QDFPTRPLSRFIPWFPYDGSKLPLRPKRSPPVISEEAAEDVKQYLTISEHDAKSHS. A compositionally biased stretch (polar residues) spans 108 to 119; the sequence is LKEQTNSGNLGK. The segment at 108–129 is disordered; that stretch reads LKEQTNSGNLGKQSEKGKQHKR.

Component of the shieldin complex, consisting of SHLD1, SHLD2, SHLD3 and MAD2L2/REV7. Within the complex, SHLD2 forms a scaffold which interacts with a SHLD3-MAD2L2 subcomplex via its N-terminus, and with SHLD1 via its C-terminus. Interacts with ASTE1.

It is found in the chromosome. Its function is as follows. Component of the shieldin complex, which plays an important role in repair of DNA double-stranded breaks (DSBs). During G1 and S phase of the cell cycle, the complex functions downstream of TP53BP1 to promote non-homologous end joining (NHEJ) and suppress DNA end resection. Mediates various NHEJ-dependent processes including immunoglobulin class-switch recombination, and fusion of unprotected telomeres. The polypeptide is Shieldin complex subunit 3 (Homo sapiens (Human)).